A 217-amino-acid polypeptide reads, in one-letter code: Ribosomal RNA small subunit methyltransferase G (217 aa).

Residues Gly79, Leu84, 130–131 (IE), and Arg148 each bind S-adenosyl-L-methionine.

The protein belongs to the methyltransferase superfamily. RNA methyltransferase RsmG family.

It localises to the cytoplasm. The catalysed reaction is guanosine(527) in 16S rRNA + S-adenosyl-L-methionine = N(7)-methylguanosine(527) in 16S rRNA + S-adenosyl-L-homocysteine. Functionally, specifically methylates the N7 position of guanine in position 527 of 16S rRNA. This chain is Ribosomal RNA small subunit methyltransferase G, found in Desulfotalea psychrophila (strain LSv54 / DSM 12343).